The following is a 412-amino-acid chain: tRNA pseudouridine synthase Pus10 (412 aa).

In terms of domain architecture, THUMP spans 73–197; that stretch reads HEPSIKFLSN…TGSVEVQIMP (125 aa). Tyr-308 and Tyr-376 together coordinate substrate.

This sequence belongs to the pseudouridine synthase Pus10 family.

It carries out the reaction uridine(54) in tRNA = pseudouridine(54) in tRNA. The catalysed reaction is uridine(55) in tRNA = pseudouridine(55) in tRNA. Responsible for synthesis of pseudouridine from uracil-54 and uracil-55 in the psi GC loop of transfer RNAs. This chain is tRNA pseudouridine synthase Pus10, found in Vulcanisaeta distributa (strain DSM 14429 / JCM 11212 / NBRC 100878 / IC-017).